A 342-amino-acid polypeptide reads, in one-letter code: Holliday junction branch migration complex subunit RuvB (342 aa).

Residues 1–182 (MRIEALNTAP…FGINSRLDYY (182 aa)) form a large ATPase domain (RuvB-L) region. Residues I21, R22, G63, K66, T67, T68, 129 to 131 (EDY), R172, Y182, and R219 contribute to the ATP site. T67 provides a ligand contact to Mg(2+). The tract at residues 183-253 (SPELLQSIIV…VARRTLESLE (71 aa)) is small ATPAse domain (RuvB-S). Residues 256–342 (EGGLDDMDKK…DHGPLFDHNS (87 aa)) form a head domain (RuvB-H) region. The DNA site is built by R311 and R316.

The protein belongs to the RuvB family. Homohexamer. Forms an RuvA(8)-RuvB(12)-Holliday junction (HJ) complex. HJ DNA is sandwiched between 2 RuvA tetramers; dsDNA enters through RuvA and exits via RuvB. An RuvB hexamer assembles on each DNA strand where it exits the tetramer. Each RuvB hexamer is contacted by two RuvA subunits (via domain III) on 2 adjacent RuvB subunits; this complex drives branch migration. In the full resolvosome a probable DNA-RuvA(4)-RuvB(12)-RuvC(2) complex forms which resolves the HJ.

The protein localises to the cytoplasm. The enzyme catalyses ATP + H2O = ADP + phosphate + H(+). Functionally, the RuvA-RuvB-RuvC complex processes Holliday junction (HJ) DNA during genetic recombination and DNA repair, while the RuvA-RuvB complex plays an important role in the rescue of blocked DNA replication forks via replication fork reversal (RFR). RuvA specifically binds to HJ cruciform DNA, conferring on it an open structure. The RuvB hexamer acts as an ATP-dependent pump, pulling dsDNA into and through the RuvAB complex. RuvB forms 2 homohexamers on either side of HJ DNA bound by 1 or 2 RuvA tetramers; 4 subunits per hexamer contact DNA at a time. Coordinated motions by a converter formed by DNA-disengaged RuvB subunits stimulates ATP hydrolysis and nucleotide exchange. Immobilization of the converter enables RuvB to convert the ATP-contained energy into a lever motion, pulling 2 nucleotides of DNA out of the RuvA tetramer per ATP hydrolyzed, thus driving DNA branch migration. The RuvB motors rotate together with the DNA substrate, which together with the progressing nucleotide cycle form the mechanistic basis for DNA recombination by continuous HJ branch migration. Branch migration allows RuvC to scan DNA until it finds its consensus sequence, where it cleaves and resolves cruciform DNA. This is Holliday junction branch migration complex subunit RuvB from Chlorobaculum parvum (strain DSM 263 / NCIMB 8327) (Chlorobium vibrioforme subsp. thiosulfatophilum).